Here is a 20-residue protein sequence, read N- to C-terminus: Venom prothrombin activator notanarin-D (20 aa).

Residues 1–10 form the Gla domain; sequence SNSLFEEVRP. Glutamate 6 and glutamate 7 each carry 4-carboxyglutamate. One can recognise a Peptidase S1 domain in the interval 11–20; it reads IVNGMDCKLG.

This sequence belongs to the peptidase S1 family. Snake venom subfamily. In terms of assembly, heterodimer of a light chain and a heavy chain; disulfide-linked. Post-translationally, gamma-carboxyglutamate residues are formed by vitamin K dependent carboxylation. These residues are essential for the binding of calcium. Expressed by the venom gland.

The protein localises to the secreted. The catalysed reaction is Selective cleavage of Arg-|-Thr and then Arg-|-Ile bonds in prothrombin to form thrombin.. Functionally, snake prothrombin activator that attacks the hemostatic system of prey. This protein is functionally similar to blood coagulation factor Xa. This chain is Venom prothrombin activator notanarin-D, found in Notechis scutatus niger (Peninsula tiger snake).